The chain runs to 394 residues: Putative agmatinase 1 (394 aa).

Positions Met-1 to Ala-20 are cleaved as a signal peptide. Residues His-186, Asp-209, His-211, Asp-213, Asp-307, and Asp-309 each coordinate Mn(2+).

Belongs to the arginase family. The cofactor is Mn(2+).

The catalysed reaction is agmatine + H2O = urea + putrescine. The polypeptide is Putative agmatinase 1 (Schizosaccharomyces pombe (strain 972 / ATCC 24843) (Fission yeast)).